The chain runs to 320 residues: Probable cell division protein WhiA (320 aa).

Residues 282–315 (SLEELGRAARPQISKDAVAGRIRRLLQRAEKAEQ) constitute a DNA-binding region (H-T-H motif).

Belongs to the WhiA family.

In terms of biological role, involved in cell division and chromosome segregation. This is Probable cell division protein WhiA from Bifidobacterium animalis subsp. lactis (strain AD011).